Reading from the N-terminus, the 97-residue chain is Translation initiation factor 1A (97 aa).

An S1-like domain is found at 8 to 82 (IRVRLPDRKK…DRADIVWRYT (75 aa)).

Belongs to the eIF-1A family.

Functionally, seems to be required for maximal rate of protein biosynthesis. Enhances ribosome dissociation into subunits and stabilizes the binding of the initiator Met-tRNA(I) to 40 S ribosomal subunits. The protein is Translation initiation factor 1A (eIF1A) of Archaeoglobus fulgidus (strain ATCC 49558 / DSM 4304 / JCM 9628 / NBRC 100126 / VC-16).